The following is a 1178-amino-acid chain: DNA-directed RNA polymerase subunit beta (1178 aa).

Belongs to the RNA polymerase beta chain family. The RNAP catalytic core consists of 2 alpha, 1 beta, 1 beta' and 1 omega subunit. When a sigma factor is associated with the core the holoenzyme is formed, which can initiate transcription.

It carries out the reaction RNA(n) + a ribonucleoside 5'-triphosphate = RNA(n+1) + diphosphate. Functionally, DNA-dependent RNA polymerase catalyzes the transcription of DNA into RNA using the four ribonucleoside triphosphates as substrates. The sequence is that of DNA-directed RNA polymerase subunit beta from Treponema pallidum (strain Nichols).